A 302-amino-acid chain; its full sequence is MPPQKIETGHSDTIHDVVMDYYGKRVATASSDCTIKITGVSNSGGSQHLATLTGHRGPVWQVAWAHPKFGSLLASCSYDGQIILWKEGNQNQWTQAHVFTDHKVSVNSIAWAPHELGLSLACGASDGNISVFSARADGGWDTTKIDQAHPVGVTSVSWAPATEPGALVSSGMIDPVYKLASGGCDSTVKVWKFSNGSWKMDCFPALNKHTDWVRDVAWAPNLGLPKSTIASGSEDGKVIIWTIGKEGEQWEGTVLKDFKTPVWRVSWSLTGNLLAVSDGNNNVTVWKESVDGEWEQVTVVEP.

WD repeat units follow at residues 9–48 (GHSD…GSQH), 54–95 (GHRG…QWTQ), 101–142 (DHKV…GWDT), 148–201 (AHPV…WKMD), 208–251 (KHTD…EQWE), and 257–296 (DFKT…EWEQ).

This sequence belongs to the WD repeat SEC13 family. As to quaternary structure, interacts with MAG5, SEC31A and SEC31B.

It localises to the golgi apparatus. The protein resides in the endoplasmic reticulum. Its function is as follows. Required for protein transport from the endoplasmic reticulum to the Golgi apparatus. The chain is Protein transport protein SEC13 homolog A from Arabidopsis thaliana (Mouse-ear cress).